Consider the following 155-residue polypeptide: Ribosome maturation factor RimP (155 aa).

Belongs to the RimP family.

It localises to the cytoplasm. Required for maturation of 30S ribosomal subunits. The chain is Ribosome maturation factor RimP from Hamiltonella defensa subsp. Acyrthosiphon pisum (strain 5AT).